A 111-amino-acid polypeptide reads, in one-letter code: Large ribosomal subunit protein uL24 (111 aa).

A compositionally biased stretch (basic and acidic residues) spans 48–65 (EKPSRSNREGGRTEREAP). The interval 48–111 (EKPSRSNREG…AKTTGEELDD (64 aa)) is disordered. Over residues 69 to 80 (SNVNPIDSNGES) the composition is skewed to polar residues. Residues 86–95 (KKVEDPDTGR) show a composition bias toward basic and acidic residues.

The protein belongs to the universal ribosomal protein uL24 family. As to quaternary structure, part of the 50S ribosomal subunit.

Its function is as follows. One of two assembly initiator proteins, it binds directly to the 5'-end of the 23S rRNA, where it nucleates assembly of the 50S subunit. One of the proteins that surrounds the polypeptide exit tunnel on the outside of the subunit. The polypeptide is Large ribosomal subunit protein uL24 (Salinibacter ruber (strain DSM 13855 / M31)).